Consider the following 712-residue polypeptide: T-box transcription factor TBX2 (712 aa).

A DNA-binding region (T-box) is located at residues 109–287; sequence LEAKELWDQF…NNPFAKGFRD (179 aa). The interval 313-450 is disordered; the sequence is PERDGAESDA…EGKEQGLAPL (138 aa). Positions 326-336 are enriched in pro residues; the sequence is DPPPAREPPTS. Residues S336, S342, and S360 each carry the phosphoserine modification. Basic and acidic residues-rich tracts occupy residues 363-372, 391-409, and 421-444; these read EPERLSEERA, TEPE…KEPA, and SLEK…EGKE. The segment at 518–601 is repression domain 1 (RD1); sequence GGNGGGGGPG…ATSAAAAAAA (84 aa). S622, S653, S657, and S676 each carry phosphoserine. The tract at residues 637–687 is disordered; sequence LTTGLASEGSKAAGGNSREPSPLPELALRKVGAPSRGALSPSGSAKEAANE.

Binds DNA as a monomer. Interacts with PML (isoform PML-2, isoform PML-3 and isoform PML-4). As to expression, expressed primarily in adult in kidney, lung, and placenta. Weak expression in heart and ovary.

Its subcellular location is the nucleus. Transcription factor which acts as a transcriptional repressor. May also function as a transcriptional activator. Binds to the palindromic T site 5'-TTCACACCTAGGTGTGAA-3' DNA sequence, or a half-site, which are present in the regulatory region of several genes. Required for cardiac atrioventricular canal formation. May cooperate with NKX2.5 to negatively modulate expression of NPPA/ANF in the atrioventricular canal. May play a role as a positive regulator of TGFB2 expression, perhaps acting in concert with GATA4 in the developing outflow tract myocardium. Plays a role in limb pattern formation. Acts as a transcriptional repressor of ADAM10 gene expression, perhaps in concert with histone deacetylase HDAC1 as cofactor. Involved in branching morphogenesis in both developing lungs and adult mammary glands, via negative modulation of target genes; acting redundantly with TBX3. Required, together with TBX3, to maintain cell proliferation in the embryonic lung mesenchyme; perhaps acting downstream of SHH, BMP and TGFbeta signaling. Involved in modulating early inner ear development, acting independently of, and also redundantly with TBX3, in different subregions of the developing ear. Acts as a negative regulator of PML function in cellular senescence. Acts as a negative regulator of expression of CDKN1A/p21, IL33 and CCN4; repression of CDKN1A is enhanced in response to UV-induced stress, perhaps as a result of phosphorylation by p38 MAPK. Negatively modulates expression of CDKN2A/p14ARF and CDH1/E-cadherin. Plays a role in induction of the epithelial-mesenchymal transition (EMT). Plays a role in melanocyte proliferation, perhaps via regulation of cyclin CCND1. Involved in melanogenesis, acting via negative modulation of expression of DHICA oxidase/TYRP1 and P protein/OCA2. Involved in regulating retinal pigment epithelium (RPE) cell proliferation, perhaps via negatively modulating transcription of the transcription factor CEBPD. The protein is T-box transcription factor TBX2 (TBX2) of Homo sapiens (Human).